We begin with the raw amino-acid sequence, 423 residues long: Histidine--tRNA ligase (423 aa).

This sequence belongs to the class-II aminoacyl-tRNA synthetase family. Homodimer.

It is found in the cytoplasm. It carries out the reaction tRNA(His) + L-histidine + ATP = L-histidyl-tRNA(His) + AMP + diphosphate + H(+). This Actinobacillus succinogenes (strain ATCC 55618 / DSM 22257 / CCUG 43843 / 130Z) protein is Histidine--tRNA ligase.